Reading from the N-terminus, the 537-residue chain is Putative cysteine ligase BshC (537 aa).

A coiled-coil region spans residues 422-450 (IEKVEGMIEQQRRLNQDLLDEVAGNQNNI).

Belongs to the BshC family.

In terms of biological role, involved in bacillithiol (BSH) biosynthesis. May catalyze the last step of the pathway, the addition of cysteine to glucosamine malate (GlcN-Mal) to generate BSH. This is Putative cysteine ligase BshC from Staphylococcus aureus (strain bovine RF122 / ET3-1).